The following is a 205-amino-acid chain: Recombination protein RecR (205 aa).

Residues 64–79 form a C4-type zinc finger; the sequence is CSRCYFITQNDLCAIC. Residues 87-182 form the Toprim domain; it reads RIVCVVEEPL…RVTRLARGLP (96 aa).

This sequence belongs to the RecR family.

May play a role in DNA repair. It seems to be involved in an RecBC-independent recombinational process of DNA repair. It may act with RecF and RecO. The polypeptide is Recombination protein RecR (Roseiflexus castenholzii (strain DSM 13941 / HLO8)).